The following is a 173-amino-acid chain: Translation initiation factor IF-3 (173 aa).

Belongs to the IF-3 family. As to quaternary structure, monomer.

It is found in the cytoplasm. Its function is as follows. IF-3 binds to the 30S ribosomal subunit and shifts the equilibrium between 70S ribosomes and their 50S and 30S subunits in favor of the free subunits, thus enhancing the availability of 30S subunits on which protein synthesis initiation begins. The sequence is that of Translation initiation factor IF-3 from Methylorubrum extorquens (strain CM4 / NCIMB 13688) (Methylobacterium extorquens).